The sequence spans 313 residues: Tyrosine recombinase XerC (313 aa).

Positions 11–97 constitute a Core-binding (CB) domain; it reads NSLQKPLERF…SLRSFFDFLI (87 aa). Residues 118–298 enclose the Tyr recombinase domain; the sequence is PLPKNLDVDE…DFQHLAQAYD (181 aa). Residues Arg157, Lys181, His250, Arg253, and His276 contribute to the active site. The active-site O-(3'-phospho-DNA)-tyrosine intermediate is the Tyr285.

It belongs to the 'phage' integrase family. XerC subfamily. In terms of assembly, forms a cyclic heterotetrameric complex composed of two molecules of XerC and two molecules of XerD.

It localises to the cytoplasm. In terms of biological role, site-specific tyrosine recombinase, which acts by catalyzing the cutting and rejoining of the recombining DNA molecules. The XerC-XerD complex is essential to convert dimers of the bacterial chromosome into monomers to permit their segregation at cell division. It also contributes to the segregational stability of plasmids. The sequence is that of Tyrosine recombinase XerC from Vibrio campbellii (strain ATCC BAA-1116).